Reading from the N-terminus, the 352-residue chain is B1 bradykinin receptor (352 aa).

The Extracellular portion of the chain corresponds to 1–41 (MASWPPLELQSSNQSQLFPQNATACDNAPEAWDLLHRVLPT). Residues Asn13 and Asn21 are each glycosylated (N-linked (GlcNAc...) asparagine). Residues 42–62 (FIISICSFGLLGNLFVLLVFL) traverse the membrane as a helical segment. Over 63-72 (LPRRRLNVAE) the chain is Cytoplasmic. Residues 73–93 (IYLANLAASDLVFVLGLPFWA) form a helical membrane-spanning segment. At 94-110 (ENIWNQFNWPFGALLCR) the chain is on the extracellular side. Residues Cys109 and Cys188 are joined by a disulfide bond. The chain crosses the membrane as a helical span at residues 111–131 (VINGIIKANLFISIFLVVAIS). At 132–153 (QDRYCVLVHPMASRRRQRRRQA) the chain is on the cytoplasmic side. The helical transmembrane segment at 154–174 (RVTCVLIWVVGGLLSIPTFLL) threads the bilayer. Topologically, residues 175–206 (RSIQAVPDLNITACILLLPHEAWHFARIVELN) are extracellular. Asn184 carries N-linked (GlcNAc...) asparagine glycosylation. Residues 207-227 (ILAFLLPLAAIIFFNYHILAS) form a helical membrane-spanning segment. The Cytoplasmic portion of the chain corresponds to 228–250 (LRGREEVSRTRCGGSKDSKTTAL). The helical transmembrane segment at 251 to 271 (ILTLVVAFLVCWAPYHFFAFL) threads the bilayer. At 272-294 (EFLFQVQAVRGCFWEDFIDLGLQ) the chain is on the extracellular side. A helical transmembrane segment spans residues 295-315 (LANFLAFTNSSLNPVIYVFVG). Over 316–352 (RLFRTKVWELYKQCTPKSLAPISSSHRKEIFQLFWRN) the chain is Cytoplasmic. Cys329 carries S-palmitoyl cysteine lipidation.

It belongs to the G-protein coupled receptor 1 family. Bradykinin receptor subfamily. BDKRB1 sub-subfamily.

The protein resides in the cell membrane. Its function is as follows. This is a receptor for bradykinin. Could be a factor in chronic pain and inflammation. The polypeptide is B1 bradykinin receptor (BDKRB1) (Macaca mulatta (Rhesus macaque)).